A 572-amino-acid polypeptide reads, in one-letter code: Hemagglutinin-neuraminidase (572 aa).

At 1–31 (MEYWKHTNHGKDACNELGTSMATHGNKITNK) the chain is on the intravirion side. A helical transmembrane segment spans residues 32-52 (ITYILWTIILVLLSIIFIIVL). Residues 53–572 (INSIKSEKAH…FKTEIPKSCS (520 aa)) lie on the Virion surface side of the membrane. Disulfide bonds link cysteine 190–cysteine 214 and cysteine 256–cysteine 269. Positions 252-257 (NRKSCS) are involved in neuraminidase activity. 2 N-linked (GlcNAc...) asparagine; by host glycosylation sites follow: asparagine 308 and asparagine 351. 2 disulfides stabilise this stretch: cysteine 355–cysteine 469 and cysteine 463–cysteine 473. A glycan (N-linked (GlcNAc...) asparagine; by host) is linked at asparagine 523. A disulfide bond links cysteine 535 and cysteine 544.

It belongs to the paramyxoviruses hemagglutinin-neuraminidase family. In terms of assembly, homotetramer; composed of disulfide-linked homodimers. Interacts with F protein trimer.

It localises to the virion membrane. The protein resides in the host cell membrane. The enzyme catalyses Hydrolysis of alpha-(2-&gt;3)-, alpha-(2-&gt;6)-, alpha-(2-&gt;8)- glycosidic linkages of terminal sialic acid residues in oligosaccharides, glycoproteins, glycolipids, colominic acid and synthetic substrates.. Its function is as follows. Attaches the virus to sialic acid-containing cell receptors and thereby initiating infection. Binding of HN protein to the receptor induces a conformational change that allows the F protein to trigger virion/cell membranes fusion. Functionally, neuraminidase activity ensures the efficient spread of the virus by dissociating the mature virions from the neuraminic acid containing glycoproteins. The chain is Hemagglutinin-neuraminidase (HN) from Homo sapiens (Human).